The chain runs to 919 residues: Lipoxygenase 3, chloroplastic (919 aa).

Residues 1–52 (MALAKELMGYPLITERSSLVSSASHFKKRTQSTQFSINPFDRRPRKTKSGVV) constitute a chloroplast transit peptide. The region spanning 86–222 (VRAVVTVRNK…DHPDKRIFFT (137 aa)) is the PLAT domain. The Lipoxygenase domain maps to 225-919 (PYLPNETPSG…CRGVPNSVSI (695 aa)). The segment at 272-310 (PDKSSELSRPKLGGKEVPYPRRCRTGRQSTVSDKDAESR) is disordered. 5 residues coordinate Fe cation: His-578, His-583, His-770, Asn-774, and Ile-919.

Belongs to the lipoxygenase family. Fe cation serves as cofactor. Expressed in roots and leaves.

Its subcellular location is the plastid. The protein resides in the chloroplast. The catalysed reaction is (9Z,12Z)-octadecadienoate + O2 = (13S)-hydroperoxy-(9Z,11E)-octadecadienoate. The enzyme catalyses (9Z,12Z,15Z)-octadecatrienoate + O2 = (13S)-hydroperoxy-(9Z,11E,15Z)-octadecatrienoate. Its pathway is lipid metabolism; oxylipin biosynthesis. 13S-lipoxygenase that can use linolenic acid as substrates. Plant lipoxygenases may be involved in a number of diverse aspects of plant physiology including growth and development, pest resistance, and senescence or responses to wounding. Catalyzes the hydroperoxidation of lipids containing a cis,cis-1,4-pentadiene structure. This Arabidopsis thaliana (Mouse-ear cress) protein is Lipoxygenase 3, chloroplastic (LOX3).